Consider the following 363-residue polypeptide: Ribosomal RNA large subunit methyltransferase M (363 aa).

S-adenosyl-L-methionine-binding positions include serine 187, 220 to 223, aspartate 239, aspartate 259, and aspartate 276; that span reads CPGG. The active-site Proton acceptor is lysine 305.

The protein belongs to the class I-like SAM-binding methyltransferase superfamily. RNA methyltransferase RlmE family. RlmM subfamily. As to quaternary structure, monomer.

The protein resides in the cytoplasm. The enzyme catalyses cytidine(2498) in 23S rRNA + S-adenosyl-L-methionine = 2'-O-methylcytidine(2498) in 23S rRNA + S-adenosyl-L-homocysteine + H(+). Functionally, catalyzes the 2'-O-methylation at nucleotide C2498 in 23S rRNA. This is Ribosomal RNA large subunit methyltransferase M from Shewanella loihica (strain ATCC BAA-1088 / PV-4).